The chain runs to 513 residues: NAD(P)H-quinone oxidoreductase subunit 2, chloroplastic (513 aa).

The next 14 helical transmembrane spans lie at 11-31 (NLIT…ILMI), 38-58 (SVWL…ILLF), 78-98 (GFTI…IPLS), 112-132 (FLIL…ANDL), 133-153 (VTIF…AGQA), 167-187 (LLMG…LYGL), 219-239 (FGAL…GFKI), 256-276 (PTPV…ALAT), 290-310 (WHIV…LIAA), 318-338 (MLAY…LVGN), 348-368 (YLLI…IFGL), 389-409 (AFAL…AGFF), 422-442 (HLYL…YYYL), and 478-498 (LGLT…NPLI).

The protein belongs to the complex I subunit 2 family. NDH is composed of at least 16 different subunits, 5 of which are encoded in the nucleus.

The protein resides in the plastid. It localises to the chloroplast thylakoid membrane. It carries out the reaction a plastoquinone + NADH + (n+1) H(+)(in) = a plastoquinol + NAD(+) + n H(+)(out). It catalyses the reaction a plastoquinone + NADPH + (n+1) H(+)(in) = a plastoquinol + NADP(+) + n H(+)(out). Functionally, NDH shuttles electrons from NAD(P)H:plastoquinone, via FMN and iron-sulfur (Fe-S) centers, to quinones in the photosynthetic chain and possibly in a chloroplast respiratory chain. The immediate electron acceptor for the enzyme in this species is believed to be plastoquinone. Couples the redox reaction to proton translocation, and thus conserves the redox energy in a proton gradient. The protein is NAD(P)H-quinone oxidoreductase subunit 2, chloroplastic of Staurastrum punctulatum (Green alga).